The sequence spans 152 residues: UPF0266 membrane protein YobD (152 aa).

Helical transmembrane passes span 6–26 (LVLILFIAALLAFAIYDQFIM), 45–65 (IDSVIFVGLIVILIYNNVTNH), and 67–87 (ALITTWLLSALALMGFYIFWI).

This sequence belongs to the UPF0266 family.

It is found in the cell inner membrane. The protein is UPF0266 membrane protein YobD of Escherichia coli O157:H7 (strain EC4115 / EHEC).